A 435-amino-acid chain; its full sequence is Xylose isomerase (435 aa).

Catalysis depends on residues histidine 100 and aspartate 103. The Mg(2+) site is built by glutamate 231, glutamate 267, histidine 270, aspartate 295, aspartate 306, aspartate 308, and aspartate 338.

This sequence belongs to the xylose isomerase family. As to quaternary structure, homotetramer. It depends on Mg(2+) as a cofactor.

Its subcellular location is the cytoplasm. It catalyses the reaction alpha-D-xylose = alpha-D-xylulofuranose. The chain is Xylose isomerase from Brucella anthropi (strain ATCC 49188 / DSM 6882 / CCUG 24695 / JCM 21032 / LMG 3331 / NBRC 15819 / NCTC 12168 / Alc 37) (Ochrobactrum anthropi).